Reading from the N-terminus, the 183-residue chain is Archaemetzincin (183 aa).

Position 132 (His132) interacts with Zn(2+). Glu133 acts as the Proton acceptor in catalysis. Residues His136, His142, Cys143, Cys148, Cys167, and Cys170 each contribute to the Zn(2+) site.

Belongs to the peptidase M54 family. As to quaternary structure, monomer. Requires Zn(2+) as cofactor.

Probable zinc metalloprotease whose natural substrate is unknown. The protein is Archaemetzincin of Aeropyrum pernix (strain ATCC 700893 / DSM 11879 / JCM 9820 / NBRC 100138 / K1).